A 309-amino-acid polypeptide reads, in one-letter code: Tagatose-6-phosphate kinase (309 aa).

It belongs to the carbohydrate kinase PfkB family. LacC subfamily.

It carries out the reaction D-tagatofuranose 6-phosphate + ATP = D-tagatofuranose 1,6-bisphosphate + ADP + H(+). Its pathway is carbohydrate metabolism; D-tagatose 6-phosphate degradation; D-glyceraldehyde 3-phosphate and glycerone phosphate from D-tagatose 6-phosphate: step 1/2. This chain is Tagatose-6-phosphate kinase, found in Streptococcus pneumoniae (strain ATCC 700669 / Spain 23F-1).